Reading from the N-terminus, the 365-residue chain is Transmembrane protein 25 (365 aa).

A signal peptide spans Met1 to Gly26. Over Glu27–Glu232 the chain is Extracellular. The region spanning Pro30–Ile123 is the Ig-like domain. Cys52 and Cys107 are disulfide-bonded. Asn106, Asn162, Asn192, and Asn205 each carry an N-linked (GlcNAc...) asparagine glycan. The helical transmembrane segment at Val233–Ser253 threads the bilayer. Residues Thr254 to Leu365 are Cytoplasmic-facing.

As to quaternary structure, interacts with GRIN2B. As to expression, expressed throughout the brain with higher levels within the hippocampus.

It is found in the late endosome. The protein localises to the lysosome. The protein resides in the cell membrane. Its subcellular location is the secreted. In neurons, modulates the degradation of NMDA receptor GRIN2B subunit. Plays a role in the regulation of neuronal excitability. The protein is Transmembrane protein 25 of Mus musculus (Mouse).